A 205-amino-acid chain; its full sequence is Arginine exporter protein ArgO (205 aa).

The next 6 helical transmembrane spans lie at 1–21 (MLAV…PLGP), 42–62 (LCAL…SALL), 67–87 (LLLA…GWGA), 111–131 (ILVT…DTFV), 147–167 (WFAL…AFLA), and 185–205 (LFVG…GFGL).

The protein belongs to the LysE/ArgO transporter (TC 2.A.75) family.

The protein localises to the cell inner membrane. The catalysed reaction is L-arginine(in) = L-arginine(out). Functionally, involved in the export of arginine. Important to control the intracellular level of arginine and the correct balance between arginine and lysine. In Yersinia pseudotuberculosis serotype O:3 (strain YPIII), this protein is Arginine exporter protein ArgO.